We begin with the raw amino-acid sequence, 768 residues long: Solute carrier family 45 member 4 (768 aa).

The segment at 1-32 (MKMAPQNADPESMQVQELSVPLPDPQKAGGAE) is disordered. 6 helical membrane-spanning segments follow: residues 63 to 83 (EFCYAMETALVTPILLQIGLP), 86 to 106 (YYSLTWFLSPILGLIFTPLIG), 123 to 143 (ILALCVGVLFGVALFLNGSAI), 155 to 175 (PIGIVLTVLGVVVLDFSADAT), 196 to 216 (LNIHAFSAGLGGAIGYVLGGL), and 233 to 253 (VLFFFAAIIFTVSVALHLFSI). 2 disordered regions span residues 259–284 (SPQQERSAEEPGALDGGEPHGVPAFP) and 379–419 (NEAK…RHAF). 2 positions are modified to phosphoserine: serine 424 and serine 454. A disordered region spans residues 460–489 (DMQKRQRQHRHRNQSGATTSSGDTESEEGE). Residues 473–482 (QSGATTSSGD) are compositionally biased toward low complexity. Serine 485 is modified (phosphoserine). The next 6 membrane-spanning stretches (helical) occupy residues 518–538 (TWFSVIAEAVFYTDFMGQVIF), 560–580 (MGCWGLVIYAATGAICSALLQ), 592–612 (VIYVLGTLGFSVGTAVMAMFP), 614–634 (VYVAMVTISTMGIVSMSISYC), 666–686 (ILSCQVYISQILVASALGGVV), and 695–715 (IPMVASVGSFLGFLTATFLVI). The disordered stretch occupies residues 726 to 768 (EQKGLSSPLAGEGRAGGNSEKPTVLKLTRKEGLQGPVETESVV). At serine 732 the chain carries Phosphoserine.

The protein belongs to the glycoside-pentoside-hexuronide (GPH) cation symporter transporter (TC 2.A.2) family.

It localises to the membrane. The catalysed reaction is sucrose(out) + H(+)(out) = sucrose(in) + H(+)(in). Its function is as follows. Proton-associated sucrose transporter. May be able to transport also glucose and fructose. In Homo sapiens (Human), this protein is Solute carrier family 45 member 4.